An 807-amino-acid chain; its full sequence is Mechanosensitive cation channel TMEM63A (807 aa).

Topologically, residues 1–51 (MTDSPFLELWQSRAVSVREQLGLGDRPNDSYCYNSAKNSTVLQGVTFGGIP) are extracellular. N-linked (GlcNAc...) asparagine glycosylation occurs at N38. A helical membrane pass occupies residues 52–74 (TVLLIDVSCFLFLILVFSIIRRR). Residues 75–134 (FWDYGRIALVSEADSEPRFQRLSSTSSSGQQDFENELGCCPWLTAIFRLHDDQILEWCGE) lie on the Cytoplasmic side of the membrane. A helical transmembrane segment spans residues 135-167 (DAIHYLSFQRHIIFLLVVVSFLSLCVILPVNLS). Residues 168–191 (GDLLDKDPYSFGRTTIANLQTDND) lie on the Extracellular side of the membrane. Residues 192-217 (LLWLHTIFAVIYLFLTVGFMRHHTQS) traverse the membrane as a helical segment. Over 218 to 416 (IKYKEENLVR…CWKNLSIQGL (199 aa)) the chain is Cytoplasmic. An intracellular linker IL2; confers mechanosensitivity region spans residues 219-414 (KYKEENLVRR…DICWKNLSIQ (196 aa)). Residues 417–444 (RWWLQWLGINFTLFLGLFFLTTPSIILS) form a helical membrane-spanning segment. Topologically, residues 445-462 (TMDKFNVTKPIHALNNPI) are extracellular. N450 is a glycosylation site (N-linked (GlcNAc...) asparagine). A helical transmembrane segment spans residues 463–490 (ISQFFPTLLLWSFSALLPSIVYYSTLLE). Residues 491–495 (SHWTK) lie on the Cytoplasmic side of the membrane. A helical transmembrane segment spans residues 496 to 532 (SGENQIMMTKVYIFLIFMVLILPSLGLTSLDFFFRWL). The Extracellular segment spans residues 533–554 (FDKTSSEASIRLECVFLPDQGA). A helical membrane pass occupies residues 555-586 (FFVNYVIASAFIGNGMELLRLPGLILYTFRMI). A gating helix region spans residues 555–586 (FFVNYVIASAFIGNGMELLRLPGLILYTFRMI). The Cytoplasmic segment spans residues 587–606 (MAKTAADRRNVKQNQAFQYE). Residues 607 to 624 (FGAMYAWMLCVFTVIMAY) form a helical membrane-spanning segment. Residues 625 to 628 (SITC) lie on the Extracellular side of the membrane. The chain crosses the membrane as a helical span at residues 629 to 651 (PIIAPFGLIYILLKHMVDRHNLY). Residues 652–661 (FIYLPAKLEK) are Cytoplasmic-facing. The helical transmembrane segment at 662-689 (GIHFAAVNQALAAPILCLFWLYFFSFLR) threads the bilayer. The Extracellular portion of the chain corresponds to 690–694 (LGMKA). Residues 695–709 (PATLFTFLVVLLTIL) traverse the membrane as a helical segment. The Cytoplasmic portion of the chain corresponds to 710–807 (VCLAHTCFGY…GSVAAAPQEA (98 aa)). S739 bears the Phosphoserine mark.

The protein belongs to the CSC1 (TC 1.A.17) family. Monomer. N-Glycosylated.

Its subcellular location is the lysosome membrane. It is found in the early endosome membrane. The protein resides in the cell membrane. The enzyme catalyses Ca(2+)(in) = Ca(2+)(out). In terms of biological role, mechanosensitive cation channel with low conductance and high activation threshold. In contrast to TMEM63B, does not show phospholipid scramblase activity. Acts as a regulator of lysosomal morphology by mediating lysosomal mechanosensitivity. Important for the baby's first breath and respiration throughout life. Upon lung inflation conducts cation currents in alveolar type 1 and 2 cells triggering lamellar body exocytosis and surfactant secretion into airspace. Also acts as an osmosensitive cation channel preferentially activated by hypotonic stress. The protein is Mechanosensitive cation channel TMEM63A (TMEM63A) of Pongo abelii (Sumatran orangutan).